The chain runs to 501 residues: Bifunctional purine biosynthesis protein PurH (501 aa).

The region spanning 1 to 144 (MKKRALISVF…KNFKDVVVLS (144 aa)) is the MGS-like domain.

It belongs to the PurH family.

The catalysed reaction is (6R)-10-formyltetrahydrofolate + 5-amino-1-(5-phospho-beta-D-ribosyl)imidazole-4-carboxamide = 5-formamido-1-(5-phospho-D-ribosyl)imidazole-4-carboxamide + (6S)-5,6,7,8-tetrahydrofolate. The enzyme catalyses IMP + H2O = 5-formamido-1-(5-phospho-D-ribosyl)imidazole-4-carboxamide. The protein operates within purine metabolism; IMP biosynthesis via de novo pathway; 5-formamido-1-(5-phospho-D-ribosyl)imidazole-4-carboxamide from 5-amino-1-(5-phospho-D-ribosyl)imidazole-4-carboxamide (10-formyl THF route): step 1/1. It functions in the pathway purine metabolism; IMP biosynthesis via de novo pathway; IMP from 5-formamido-1-(5-phospho-D-ribosyl)imidazole-4-carboxamide: step 1/1. The chain is Bifunctional purine biosynthesis protein PurH from Clostridium perfringens (strain ATCC 13124 / DSM 756 / JCM 1290 / NCIMB 6125 / NCTC 8237 / Type A).